Here is a 113-residue protein sequence, read N- to C-terminus: Death-associated protein-like 1.S (113 aa).

A disordered region spans residues 1 to 53 (MTKELKVQSSPQALKAGHLPAVKAGGMRVSKKQGNDENSAPEKNAKKTLQEKP).

Belongs to the DAP-DAPL1 family. In terms of assembly, associates with ribosomes; preventing translation. Interacts with eiF5a (eif5a and eif5a2); preventing translation.

In terms of biological role, ribosome-binding protein that promotes ribosome hibernation, a process during which ribosomes are stabilized in an inactive state and preserved from proteasomal degradation. Acts via its association with eiF5a (eif5a and eif5a2) at the polypeptide exit tunnel of the ribosome, preventing mRNA translation. Plays a key role in ribosome hibernation in the mature egg by preventing mRNA translation, leading to ribosome inactivation. Ribosomes, which are produced in large quantities during oogenesis, are stored and translationally repressed in the egg and early embryo. This chain is Death-associated protein-like 1.S (dapl1.S), found in Xenopus laevis (African clawed frog).